The sequence spans 206 residues: Large ribosomal subunit protein uL4 (206 aa).

Residues 49–73 are disordered; sequence KTKTISEISGTTKKPFAQKGGGRAR.

This sequence belongs to the universal ribosomal protein uL4 family. Part of the 50S ribosomal subunit.

Functionally, one of the primary rRNA binding proteins, this protein initially binds near the 5'-end of the 23S rRNA. It is important during the early stages of 50S assembly. It makes multiple contacts with different domains of the 23S rRNA in the assembled 50S subunit and ribosome. Forms part of the polypeptide exit tunnel. This Paramagnetospirillum magneticum (strain ATCC 700264 / AMB-1) (Magnetospirillum magneticum) protein is Large ribosomal subunit protein uL4.